The chain runs to 857 residues: Protein ARG5,6, mitochondrial (857 aa).

The N-acetyltransferase domain maps to 341–492 (INRNSLRDFG…FDSSSIGSSL (152 aa)). The disordered stretch occupies residues 509 to 532 (GFHHSTVRRNTNPNPPLSEGKQTE). Residue C669 is part of the active site.

In the N-terminal section; belongs to the acetylglutamate kinase family. It in the C-terminal section; belongs to the NAGSA dehydrogenase family.

It localises to the mitochondrion. It carries out the reaction N-acetyl-L-glutamate 5-semialdehyde + phosphate + NADP(+) = N-acetyl-L-glutamyl 5-phosphate + NADPH + H(+). It catalyses the reaction N-acetyl-L-glutamate + ATP = N-acetyl-L-glutamyl 5-phosphate + ADP. It participates in amino-acid biosynthesis; L-arginine biosynthesis; N(2)-acetyl-L-ornithine from L-glutamate: step 2/4. The protein operates within amino-acid biosynthesis; L-arginine biosynthesis; N(2)-acetyl-L-ornithine from L-glutamate: step 3/4. The protein is Protein ARG5,6, mitochondrial (ARG5,6) of Candida albicans (Yeast).